A 173-amino-acid polypeptide reads, in one-letter code: Zinc resistance-associated protein homolog (173 aa).

The signal sequence occupies residues 1–28 (MNSKRIALGIIALATVVSLGTAANNAFA).

The protein belongs to the ZraP family.

In Nitratidesulfovibrio vulgaris (strain ATCC 29579 / DSM 644 / CCUG 34227 / NCIMB 8303 / VKM B-1760 / Hildenborough) (Desulfovibrio vulgaris), this protein is Zinc resistance-associated protein homolog.